The sequence spans 189 residues: Probable chorismate pyruvate-lyase (189 aa).

Positions 74, 113, and 175 each coordinate substrate.

The protein belongs to the UbiC family.

Its subcellular location is the cytoplasm. It catalyses the reaction chorismate = 4-hydroxybenzoate + pyruvate. The protein operates within cofactor biosynthesis; ubiquinone biosynthesis. Functionally, removes the pyruvyl group from chorismate, with concomitant aromatization of the ring, to provide 4-hydroxybenzoate (4HB) for the ubiquinone pathway. This is Probable chorismate pyruvate-lyase from Azoarcus sp. (strain BH72).